Consider the following 514-residue polypeptide: Cobyric acid synthase (514 aa).

The GATase cobBQ-type domain occupies 258-458 (ALMVGVVRLP…IHGIFDNDGL (201 aa)). Catalysis depends on C339, which acts as the Nucleophile. Residue H450 is part of the active site.

It belongs to the CobB/CobQ family. CobQ subfamily.

It participates in cofactor biosynthesis; adenosylcobalamin biosynthesis. Functionally, catalyzes amidations at positions B, D, E, and G on adenosylcobyrinic A,C-diamide. NH(2) groups are provided by glutamine, and one molecule of ATP is hydrogenolyzed for each amidation. This is Cobyric acid synthase from Syntrophobacter fumaroxidans (strain DSM 10017 / MPOB).